The following is an 89-amino-acid chain: Cytochrome b (89 aa).

2 consecutive transmembrane segments (helical) span residues 38–58 (FGPLAGICLVIQIVTGVFLAM) and 82–89 (WLLRYMHA). His-88 contributes to the heme b binding site.

Belongs to the cytochrome b family. In terms of assembly, the main subunits of complex b-c1 are: cytochrome b, cytochrome c1 and the Rieske protein. Requires heme b as cofactor.

Its subcellular location is the mitochondrion inner membrane. Component of the ubiquinol-cytochrome c reductase complex (complex III or cytochrome b-c1 complex) that is part of the mitochondrial respiratory chain. The b-c1 complex mediates electron transfer from ubiquinol to cytochrome c. Contributes to the generation of a proton gradient across the mitochondrial membrane that is then used for ATP synthesis. The chain is Cytochrome b (MT-CYB) from Brassica napus (Rape).